Here is a 1778-residue protein sequence, read N- to C-terminus: MDDKEPKRWPTLRDRLCSDGFLFPQYPIKPYHLKGIHRAVFYRDLEELKFVLLTRYDINKRDRKERTALHLACATGQPEMVHLLVSRRCELNLCDREDRTPLIKAVQLRQEACATLLLQNGADPNITDVFGRTALHYAVYNEDTSMIEKLLSYGANIEECSEDEYPPLFLAVSQRKVKMVEFLLKKKANINAVDYLGRSALIHAVTLGEKDIVILLLQHNIDVFSRDVYGKLAEDYASEAKNRVIFELIYEYERKKHEELSINSNPVSSQKQPALKATSGKEDSISNIATEIKDGQKSGTVSSQKQPALKGTSDKNDSVSNTATEIKDEQKSGTVSSQKQPALKDTSDKNDSVSNTATEIKDEQKSGTVLPAVEQCLNRSLYRPDAVAQPVTEDEFALESEIISKLYIPKRKIISPRSIEDVLPPVEEAVDRCLYLLDRFAQAVTKDKFALESENISEPYFTNRRTISQQSAEKLDAACGIDKTENGTLFEDQNVDKEGKALPATGQKANVSPEQPPLFTHTVKDSDHISTRFLGSMDSLTSSEESSERPPLSTLTLKEADPSSKAAMRRKDSPPPGKVSSQKQPAEKATSDDKDSVSNIATEIKEGPISGTVSSQKQPAEKATSDEKDSVSNIATEIKEGQQSGTVSPQKQSAWKVIFKKKVSLLNIATRITGGGKSGTVSSQKQPPSKATSDKTDSALNIATEIKDGLQCGTVSSQKQPALKATTDEEDSVSNIATEIKDGEKSGTVSSQKQPALKATTDEEDSVSIIATEIKDGEKSGTVSSRKKPALKATSDEKDSFSNITREKKDGEISRTVTSEKPAGLKATSDEEDSVLNIARGKEDGEKTRRVSSRKKPALKATSDEKDSFSNITREKKDGETSRTVSSQKPPALKATSDEEDSVLNIAREKKDGEKSRTVSSEKPSGLKATSDEKDSVLNIARGKKHGEKTRRVSSHKQPALKATSDKENSVPNMATETKDEQISGTVSSQKQPALKATSDKKDSVSNIPTEIKDGQQSGTVSSQKQLAWKATSVKKDSVSNIATEIKDGQIRGTVSSQRQPALKATGDEKDSVSNIAREIKDGEKSGTVSPQKQSAQKVIFKKKVSLLNIATRITGGWKSGTEYPENLPTLKATIENKNSVLNTATKMKDVQTSTPEQDLEMASEGEQKRLEEYENNQPQVKNQIHSRDDLDDIIQSSQTVSEDGDSLCCNCKNVILLIDQHEMKCKDCVHLLKIKKTFCLCKRLTELKDNHCEQLRVKIRKLKNKASVLQKRLSEKEEIKSQLKHETLELEKELCSLRFAIQQEKKKRRNVEELHQKVREKLRITEEQYRIEADVTKPIKPALKSAEVELKTGGNNSNQVSETDEKEDLLHENRLMQDEIARLRLEKDTIKNQNLEKKYLKDFEIVKRKHEDLQKALKRNEETLAETIACYSGQLAALTDENTTLRSKLEKQRESGQRLETEMQSYRCRLNAALCDHDQSHSSKRDQELAFQGTVDKCCHLQENLNSHVLILSLQLSKAESKFRVLETELHYTGEALKEKALVFEHVQSELKQKQSQMKDIEKMYKSGYNTMEKCIEKQERFCQLKKQNMLLQQQLDDARNKADNQEKAILNIQARCDARVENLQAECRKHRLLLEEDNKMLVNELNHSKEKKCQYEKEKAEREVAVRQLQQKQDDVLNKRSATKALLDASSRHCIYLENGMQDSRKKLDQMRSQFQEIQDQLTATIRCTKEMEGDAQKLEVENVMMRKIIKKQDEQIERFEKILQHSSLMLQVFES.

ANK repeat units follow at residues 64–93 (KERTALHLACATGQPEMVHLLVSRRCELNL), 97–126 (EDRTPLIKAVQLRQEACATLLLQNGADPNI), 130–159 (FGRTALHYAVYNEDTSMIEKLLSYGANIEE), 163–192 (DEYPPLFLAVSQRKVKMVEFLLKKKANINA), and 196–225 (LGRSALIHAVTLGEKDIVILLLQHNIDVFS). Disordered regions lie at residues 260–365 (LSIN…DEQK), 501–526 (ALPATGQKANVSPEQPPLFTHTVKDS), 538–653 (DSLT…QKQS), 671–1027 (RITG…QKQL), and 1051–1072 (IRGTVSSQRQPALKATGDEKDS). 2 stretches are compositionally biased toward polar residues: residues 261–272 (SINSNPVSSQKQ) and 297–306 (KSGTVSSQKQ). Positions 539–555 (SLTSSEESSERPPLSTL) are enriched in low complexity. Basic and acidic residues-rich tracts occupy residues 585–596 (PAEKATSDDKDS) and 619–630 (PAEKATSDEKDS). Polar residues-rich tracts occupy residues 631–653 (VSNIATEIKEGQQSGTVSPQKQS) and 679–691 (GTVSSQKQPPSKA). The span at 794 to 813 (TSDEKDSFSNITREKKDGEI) shows a compositional bias: basic and acidic residues. Serine 829 carries the post-translational modification Phosphoserine. 2 stretches are compositionally biased toward basic and acidic residues: residues 840–849 (RGKEDGEKTR) and 862–881 (TSDEKDSFSNITREKKDGET). Serine 897 carries the post-translational modification Phosphoserine. Residues 907–917 (AREKKDGEKSR) are compositionally biased toward basic and acidic residues. The span at 942–955 (RGKKHGEKTRRVSS) shows a compositional bias: basic residues. 2 stretches are compositionally biased toward polar residues: residues 983–992 (ISGTVSSQKQ) and 1005–1026 (VSNIPTEIKDGQQSGTVSSQKQ). Coiled coils occupy residues 1157 to 1187 (EQDLEMASEGEQKRLEEYENNQPQVKNQIHS), 1247 to 1333 (ELKD…YRIE), 1362 to 1480 (SETD…DHDQ), and 1544 to 1768 (VFEH…ILQH).

It belongs to the ANKRD36 family.

The protein is Ankyrin repeat domain-containing protein 36C (ANKRD36C) of Homo sapiens (Human).